We begin with the raw amino-acid sequence, 391 residues long: Paired box protein Pax-5 (391 aa).

The segment at residues 16 to 142 is a DNA-binding region (paired); that stretch reads GHGGVNQLGG…SSINRIIRTK (127 aa). A PAI subdomain region spans residues 19-75; that stretch reads GVNQLGGVFVNGRPLPDVVRQRIVELAHQGVRPCDISRQLRVSHGCVSKILGRYYET. The RED subdomain stretch occupies residues 94 to 142; sequence KVVEKIAEYKRQNPTMFAWEIRDRLLAERVCDNDTVPSVSSINRIIRTK. The disordered stretch occupies residues 182–218; sequence SGILGITSPSADTNKRKRDEGIQESPVPNGHSLPGRD.

Interacts with ETS1; this interaction alters PAX5 DNA-binding properties. Binds DNA as a monomer. Interacts with TBP; this interaction allows PAX5 to interact with the basal transcription machinery. Interacts with RB1. Interacts with TLE4. Interacts with DAXX. In terms of processing, O-glycosylated. Post-translationally, phosphorylated by SYK. This phosphorylation plays an important role in the abolition of BLIMP1 repression by PAX5 in order to trigger plasma cell differentiation. As to expression, expressed in all B-lymphoid organs, in the embryonic midbrain and in adult testis.

The protein localises to the nucleus. Transcription factor that plays an essential role in commitment of lymphoid progenitors to the B-lymphocyte lineage. Fulfills a dual role by repressing B-lineage inappropriate genes and simultaneously activating B-lineage-specific genes. In turn, regulates cell adhesion and migration, induces V(H)-to-D(H)J(H) recombination, facilitates pre-B-cell receptor signaling and promotes development to the mature B-cell stage. Repression of the cohesin-release factor WAPL causes global changes of the chromosomal architecture in pro-B cells to facilitate the generation of a diverse antibody repertoire. The protein is Paired box protein Pax-5 (Pax5) of Mus musculus (Mouse).